A 449-amino-acid chain; its full sequence is Tubulin alpha-1 chain (449 aa).

8 residues coordinate GTP: Q11, E71, S140, G144, T145, T179, N206, and N228. E71 serves as a coordination point for Mg(2+). The active site involves E254.

Belongs to the tubulin family. In terms of assembly, dimer of alpha and beta chains. A typical microtubule is a hollow water-filled tube with an outer diameter of 25 nm and an inner diameter of 15 nM. Alpha-beta heterodimers associate head-to-tail to form protofilaments running lengthwise along the microtubule wall with the beta-tubulin subunit facing the microtubule plus end conferring a structural polarity. Microtubules usually have 13 protofilaments but different protofilament numbers can be found in some organisms and specialized cells. Mg(2+) is required as a cofactor.

The protein resides in the cytoplasm. The protein localises to the cytoskeleton. The catalysed reaction is GTP + H2O = GDP + phosphate + H(+). In terms of biological role, tubulin is the major constituent of microtubules, a cylinder consisting of laterally associated linear protofilaments composed of alpha- and beta-tubulin heterodimers. Microtubules grow by the addition of GTP-tubulin dimers to the microtubule end, where a stabilizing cap forms. Below the cap, tubulin dimers are in GDP-bound state, owing to GTPase activity of alpha-tubulin. The protein is Tubulin alpha-1 chain (tubA) of Emericella nidulans (strain FGSC A4 / ATCC 38163 / CBS 112.46 / NRRL 194 / M139) (Aspergillus nidulans).